A 385-amino-acid polypeptide reads, in one-letter code: MATGDLKRSLRNLEQVLRSLNYPREVDCVGLVKGDTAASLPIISYSLTSYSPYVAELLVDSNIELLAKNDLRFIDTVYKLLRDQFNYKPILTKKQFIQCGFAEWKIQIICDILNCVMKKHKELSSLEKTPSQQRKKTSSAKSEPCSSTEKTSTEPVGIDVTGRFVTSGKKKAVVIRHLYNEDGANIPEDTVTDVNEAFDVCDIKAAEITIPELQVPDINCEQEDITVNPEVTALQSMLAECQEKLKKLTCIESRLESLEEKMKGKVLVNEKTWANLLSRVTLLETEMLLSKKNDEYMQFNEMSEDYSSSSDMDSLNPDRKSKEERHANIPLSSGYSTVSSDSTPRTSTVNYCGLKEISEETTMQKMERMKKMFEETAELLKCPNH.

Positions 11–192 are binds with microtubules and centrioles; that stretch reads RNLEQVLRSL…GANIPEDTVT (182 aa). The tract at residues 126 to 154 is disordered; sequence LEKTPSQQRKKTSSAKSEPCSSTEKTSTE. Positions 139 to 154 are enriched in polar residues; it reads SAKSEPCSSTEKTSTE. The stretch at 230–271 forms a coiled coil; the sequence is EVTALQSMLAECQEKLKKLTCIESRLESLEEKMKGKVLVNEK. A disordered region spans residues 303–348; it reads SEDYSSSSDMDSLNPDRKSKEERHANIPLSSGYSTVSSDSTPRTST. Over residues 305 to 314 the composition is skewed to low complexity; it reads DYSSSSDMDS. Basic and acidic residues predominate over residues 316 to 327; sequence NPDRKSKEERHA. A compositionally biased stretch (low complexity) spans 332 to 342; that stretch reads SSGYSTVSSDS. A Phosphoserine modification is found at Ser342. Phosphothreonine is present on Thr343. The stretch at 358–381 forms a coiled coil; it reads SEETTMQKMERMKKMFEETAELLK.

Interacts with CROCC. Interacts with POC1B; the interaction is direct and recruits POC1B to centriolar microtubules. Binds to centriolar microtubules.

It is found in the cytoplasm. The protein localises to the cytoskeleton. It localises to the microtubule organizing center. Its subcellular location is the centrosome. The protein resides in the centriole. It is found in the spindle pole. The protein localises to the midbody. In terms of biological role, centriole-enriched microtubule-binding protein involved in centriole biogenesis. In collaboration with CEP295 and POC1B, is required for the centriole-to-centrosome conversion by ensuring the formation of bona fide centriole wall. Functions as a linker component that maintains centrosome cohesion. Associates with CROCC and regulates its stability and localization to the centrosome. The sequence is that of Centrosomal protein of 44 kDa (CEP44) from Bos taurus (Bovine).